The sequence spans 202 residues: Protease (202 aa).

Residues His55, Asp72, and Cys122 contribute to the active site.

Belongs to the peptidase C5 family. Interacts with protease cofactor pVI-C; this interaction is necessary for protease activation.

The protein localises to the virion. Its subcellular location is the host nucleus. It catalyses the reaction Cleaves proteins of the adenovirus and its host cell at two consensus sites: -Yaa-Xaa-Gly-Gly-|-Xaa- and -Yaa-Xaa-Gly-Xaa-|-Gly- (in which Yaa is Met, Ile or Leu, and Xaa is any amino acid).. Requires DNA and protease cofactor for maximal activation. Inside nascent virions, becomes partially activated by binding to the viral DNA, allowing it to cleave the cofactor that binds to the protease and fully activates it. Actin, like the viral protease cofactor, seems to act as a cofactor in the cleavage of cytokeratin 18 and of actin itself. Functionally, cleaves viral precursor proteins (pTP, pIIIa, pVI, pVII, pVIII, and pX) inside newly assembled particles giving rise to mature virions. Protease complexed to its cofactor slides along the viral DNA to specifically locate and cleave the viral precursors. Mature virions have a weakened organization compared to the unmature virions, thereby facilitating subsequent uncoating. Without maturation, the particle lacks infectivity and is unable to uncoat. Late in adenovirus infection, in the cytoplasm, may participate in the cytoskeleton destruction. Cleaves host cell cytoskeletal keratins K7 and K18. In Bovine adenovirus 7 (BAdV-7), this protein is Protease.